Reading from the N-terminus, the 234-residue chain is Thiamine import ATP-binding protein ThiQ (234 aa).

In terms of domain architecture, ABC transporter spans 2-230 (LTLQQVHYYY…HSHPELVEFF (229 aa)). 32 to 39 (GPSGAGKS) lines the ATP pocket.

The protein belongs to the ABC transporter superfamily. Thiamine importer (TC 3.A.1.19.1) family. In terms of assembly, the complex is composed of two ATP-binding proteins (ThiQ), two transmembrane proteins (ThiP) and a solute-binding protein (ThiB).

It is found in the cell inner membrane. The enzyme catalyses thiamine(out) + ATP + H2O = thiamine(in) + ADP + phosphate + H(+). Part of the ABC transporter complex ThiBPQ involved in thiamine import. Responsible for energy coupling to the transport system. This chain is Thiamine import ATP-binding protein ThiQ, found in Vibrio vulnificus (strain CMCP6).